Here is a 188-residue protein sequence, read N- to C-terminus: UPF0301 protein PD_1276 (188 aa).

The protein belongs to the UPF0301 (AlgH) family.

This chain is UPF0301 protein PD_1276, found in Xylella fastidiosa (strain Temecula1 / ATCC 700964).